The primary structure comprises 412 residues: MAGSAPEGTQFDARQFDQKLNEVLEGQDEFFTSYDDVHESFDAMGLQENLLRGIYAYGFEKPSAIQQRGIVPFCKGLDVIQQAQSGTGKTATFCSGVLQQLDFSLIQCQALVLAPTRELAQQIEKVMRALGDYLGVKVHACVGGTSVREDQRILQAGVHVVVGTPGRVFDMLKRQSLRADNIKMFVLDEADEMLSRGFKDQIYDIFQLLPPKIQVGVFSATMPPEALEITRKFMSKPVRILVKRDELTLEGIKQFYVNVEKEEWKLETLCDLYETLAITQSVIFVNTRRKVDWLTDKMRSRDHTVSATHGDMDQNTRDIIMREFRSGSSRVLITTDLLARGIDVQQVSLVINFDLPTQPENYLHRIGRSGRFGRKGVAINFVTRDDERMLFDIQKFYNVVVEELPSNVADLL.

At Ala-2 the chain carries N-acetylalanine. Residues Glu-39–Gln-67 carry the Q motif motif. The Helicase ATP-binding domain maps to Ile-70–Ile-240. Ala-83–Thr-90 provides a ligand contact to ATP. Ser-104 bears the Phosphoserine mark. Thr-145 carries the phosphothreonine modification. Residues Asp-188–Asp-191 carry the DEAD box motif. Residues Gly-251–Leu-412 form the Helicase C-terminal domain.

Belongs to the DEAD box helicase family. eIF4A subfamily. In terms of assembly, eIF4F is a multi-subunit complex, the composition of which varies with external and internal environmental conditions. It is composed of at least EIF4A, EIF4E and EIF4G. Interacts with CDKA-1. Interacts with MRF1, MRF2, MRF3/ECIP1 and MRF4. In terms of tissue distribution, highly expressed in the whole plant.

Its subcellular location is the cytoplasm. The catalysed reaction is ATP + H2O = ADP + phosphate + H(+). Its function is as follows. ATP-dependent RNA helicase which is a subunit of the eIF4F complex involved in cap recognition and is required for mRNA binding to ribosome. In the current model of translation initiation, eIF4A unwinds RNA secondary structures in the 5'-UTR of mRNAs which is necessary to allow efficient binding of the small ribosomal subunit, and subsequent scanning for the initiator codon. The sequence is that of Eukaryotic initiation factor 4A-1 from Arabidopsis thaliana (Mouse-ear cress).